The chain runs to 320 residues: MPSQLEALRRHTVVVADTGDFEAMRALRPTDATTNPSLILKAVQQEAYRPLLVQTARAHQGASPAEITDRLLVAFGRQILDIVPGRVSTEVDARLSFDTRATVERARGLIALYQAAGVPRERVLIKIASTWEGIQAARVLQAEGIRCNLTLLFCLPQAAACADAGVQLISPFVGRIYDWHKKNAGAEWVEDARRGANDPGVQSVSRIYRYYKRFGIETEIMGASFRNVDQILALAGCDLLTISPELLTRLSQTEGEVPAALSPQAGHDDADAVRLDGGEVAFRTQLNEDAMASEKLSEGIRLFVADARKLDALIESHGAA.

Lys-126 (schiff-base intermediate with substrate) is an active-site residue.

This sequence belongs to the transaldolase family. Type 1 subfamily. In terms of assembly, homodimer.

It is found in the cytoplasm. It catalyses the reaction D-sedoheptulose 7-phosphate + D-glyceraldehyde 3-phosphate = D-erythrose 4-phosphate + beta-D-fructose 6-phosphate. It participates in carbohydrate degradation; pentose phosphate pathway; D-glyceraldehyde 3-phosphate and beta-D-fructose 6-phosphate from D-ribose 5-phosphate and D-xylulose 5-phosphate (non-oxidative stage): step 2/3. In terms of biological role, transaldolase is important for the balance of metabolites in the pentose-phosphate pathway. The chain is Transaldolase from Bordetella bronchiseptica (strain ATCC BAA-588 / NCTC 13252 / RB50) (Alcaligenes bronchisepticus).